Reading from the N-terminus, the 347-residue chain is Phosphate acyltransferase (347 aa).

This sequence belongs to the PlsX family. In terms of assembly, homodimer. Probably interacts with PlsY.

Its subcellular location is the cytoplasm. It carries out the reaction a fatty acyl-[ACP] + phosphate = an acyl phosphate + holo-[ACP]. Its pathway is lipid metabolism; phospholipid metabolism. Catalyzes the reversible formation of acyl-phosphate (acyl-PO(4)) from acyl-[acyl-carrier-protein] (acyl-ACP). This enzyme utilizes acyl-ACP as fatty acyl donor, but not acyl-CoA. This Dehalococcoides mccartyi (strain ATCC BAA-2100 / JCM 16839 / KCTC 5957 / BAV1) protein is Phosphate acyltransferase.